The following is a 343-amino-acid chain: Dihydroorotate dehydrogenase (quinone) (343 aa).

FMN-binding positions include 61–65 (AGLDK) and threonine 85. Residue lysine 65 participates in substrate binding. A substrate-binding site is contributed by 110-114 (NRMGF). Residues asparagine 138 and asparagine 171 each coordinate FMN. Asparagine 171 lines the substrate pocket. Residue serine 174 is the Nucleophile of the active site. Residue asparagine 176 participates in substrate binding. Lysine 216 and threonine 244 together coordinate FMN. Position 245–246 (245–246 (NT)) interacts with substrate. FMN is bound by residues glycine 267, glycine 296, and 317-318 (YS).

This sequence belongs to the dihydroorotate dehydrogenase family. Type 2 subfamily. In terms of assembly, monomer. FMN is required as a cofactor.

It localises to the cell membrane. It carries out the reaction (S)-dihydroorotate + a quinone = orotate + a quinol. It participates in pyrimidine metabolism; UMP biosynthesis via de novo pathway; orotate from (S)-dihydroorotate (quinone route): step 1/1. Its function is as follows. Catalyzes the conversion of dihydroorotate to orotate with quinone as electron acceptor. The sequence is that of Dihydroorotate dehydrogenase (quinone) from Pseudomonas syringae pv. tomato (strain ATCC BAA-871 / DC3000).